A 140-amino-acid polypeptide reads, in one-letter code: Putative transmembrane protein 49 (140 aa).

2 helical membrane passes run 23 to 43 (LIMS…IGGV) and 93 to 110 (IAVH…RYMY).

It localises to the host membrane. The polypeptide is Putative transmembrane protein 49 (SIFV0049) (Saccharolobus islandicus (Sulfolobus islandicus)).